The primary structure comprises 152 residues: UPF0178 protein Shewmr7_1635 (152 aa).

Belongs to the UPF0178 family.

In Shewanella sp. (strain MR-7), this protein is UPF0178 protein Shewmr7_1635.